The chain runs to 234 residues: Proteasome subunit alpha type-2 (234 aa).

A2 is modified (N-acetylalanine). The residue at position 6 (Y6) is a Phosphotyrosine. Residues S7, S14, and S16 each carry the phosphoserine modification. Y24 bears the Phosphotyrosine mark. N6-acetyllysine is present on K70. Y76 and Y121 each carry phosphotyrosine. N6-acetyllysine is present on K171.

The protein belongs to the peptidase T1A family. In terms of assembly, the 26S proteasome consists of a 20S proteasome core and two 19S regulatory subunits. The 20S proteasome core is a barrel-shaped complex made of 28 subunits that are arranged in four stacked rings. The two outer rings are each formed by seven alpha subunits, and the two inner rings are formed by seven beta subunits. The proteolytic activity is exerted by three beta-subunits PSMB5, PSMB6 and PSMB7. Post-translationally, phosphorylated on tyrosine residues; which may be important for nuclear import. Detected in liver (at protein level).

The protein localises to the cytoplasm. It is found in the nucleus. Component of the 20S core proteasome complex involved in the proteolytic degradation of most intracellular proteins. This complex plays numerous essential roles within the cell by associating with different regulatory particles. Associated with two 19S regulatory particles, forms the 26S proteasome and thus participates in the ATP-dependent degradation of ubiquitinated proteins. The 26S proteasome plays a key role in the maintenance of protein homeostasis by removing misfolded or damaged proteins that could impair cellular functions, and by removing proteins whose functions are no longer required. Associated with the PA200 or PA28, the 20S proteasome mediates ubiquitin-independent protein degradation. This type of proteolysis is required in several pathways including spermatogenesis (20S-PA200 complex) or generation of a subset of MHC class I-presented antigenic peptides (20S-PA28 complex). The protein is Proteasome subunit alpha type-2 (Psma2) of Mus musculus (Mouse).